The chain runs to 508 residues: Light-independent protochlorophyllide reductase subunit B (508 aa).

Aspartate 36 serves as a coordination point for [4Fe-4S] cluster. Aspartate 294 (proton donor) is an active-site residue. 429–430 provides a ligand contact to substrate; it reads GM.

The protein belongs to the ChlB/BchB/BchZ family. In terms of assembly, protochlorophyllide reductase is composed of three subunits; ChlL, ChlN and ChlB. Forms a heterotetramer of two ChlB and two ChlN subunits. Requires [4Fe-4S] cluster as cofactor.

The catalysed reaction is chlorophyllide a + oxidized 2[4Fe-4S]-[ferredoxin] + 2 ADP + 2 phosphate = protochlorophyllide a + reduced 2[4Fe-4S]-[ferredoxin] + 2 ATP + 2 H2O. The protein operates within porphyrin-containing compound metabolism; chlorophyll biosynthesis (light-independent). Component of the dark-operative protochlorophyllide reductase (DPOR) that uses Mg-ATP and reduced ferredoxin to reduce ring D of protochlorophyllide (Pchlide) to form chlorophyllide a (Chlide). This reaction is light-independent. The NB-protein (ChlN-ChlB) is the catalytic component of the complex. The sequence is that of Light-independent protochlorophyllide reductase subunit B from Nostoc punctiforme (strain ATCC 29133 / PCC 73102).